The sequence spans 398 residues: Dual-specificity RNA methyltransferase RlmN (398 aa).

Glu119 functions as the Proton acceptor in the catalytic mechanism. Residues 125-364 enclose the Radical SAM core domain; it reads EGDRATLCVS…TIVRKTRGDD (240 aa). Cys132 and Cys369 are oxidised to a cystine. The [4Fe-4S] cluster site is built by Cys139, Cys143, and Cys146. Residues 193–194, Ser225, 247–249, and Asn326 contribute to the S-adenosyl-L-methionine site; these read GE and SLH. Residue Cys369 is the S-methylcysteine intermediate of the active site.

It belongs to the radical SAM superfamily. RlmN family. Requires [4Fe-4S] cluster as cofactor.

It localises to the cytoplasm. The enzyme catalyses adenosine(2503) in 23S rRNA + 2 reduced [2Fe-2S]-[ferredoxin] + 2 S-adenosyl-L-methionine = 2-methyladenosine(2503) in 23S rRNA + 5'-deoxyadenosine + L-methionine + 2 oxidized [2Fe-2S]-[ferredoxin] + S-adenosyl-L-homocysteine. The catalysed reaction is adenosine(37) in tRNA + 2 reduced [2Fe-2S]-[ferredoxin] + 2 S-adenosyl-L-methionine = 2-methyladenosine(37) in tRNA + 5'-deoxyadenosine + L-methionine + 2 oxidized [2Fe-2S]-[ferredoxin] + S-adenosyl-L-homocysteine. Its function is as follows. Specifically methylates position 2 of adenine 2503 in 23S rRNA and position 2 of adenine 37 in tRNAs. m2A2503 modification seems to play a crucial role in the proofreading step occurring at the peptidyl transferase center and thus would serve to optimize ribosomal fidelity. The chain is Dual-specificity RNA methyltransferase RlmN from Yersinia enterocolitica serotype O:8 / biotype 1B (strain NCTC 13174 / 8081).